We begin with the raw amino-acid sequence, 225 residues long: Methylthioribulose-1-phosphate dehydratase (225 aa).

Zn(2+)-binding residues include H106 and H108.

Belongs to the aldolase class II family. MtnB subfamily. Zn(2+) is required as a cofactor.

The enzyme catalyses 5-(methylsulfanyl)-D-ribulose 1-phosphate = 5-methylsulfanyl-2,3-dioxopentyl phosphate + H2O. It participates in amino-acid biosynthesis; L-methionine biosynthesis via salvage pathway; L-methionine from S-methyl-5-thio-alpha-D-ribose 1-phosphate: step 2/6. Functionally, catalyzes the dehydration of methylthioribulose-1-phosphate (MTRu-1-P) into 2,3-diketo-5-methylthiopentyl-1-phosphate (DK-MTP-1-P). In Xanthomonas oryzae pv. oryzae (strain MAFF 311018), this protein is Methylthioribulose-1-phosphate dehydratase.